Here is a 263-residue protein sequence, read N- to C-terminus: Indolethylamine N-methyltransferase (263 aa).

Lys13 bears the N6-succinyllysine mark. S-adenosyl-L-methionine-binding positions include Tyr20, Tyr25, Gly63, Tyr69, 85 to 87 (DFT), and Asn90. Lys96 is modified (N6-succinyllysine). Residues 142–143 (DV) and Leu163 contribute to the S-adenosyl-L-methionine site.

This sequence belongs to the class I-like SAM-binding methyltransferase superfamily. NNMT/PNMT/TEMT family. In terms of assembly, monomer. As to expression, widely expressed. The highest levels were in thyroid, adrenal gland, adult and fetal lung. Intermediate levels in heart, placenta, skeletal muscle, testis, small intestine, pancreas, stomach, spinal cord, lymph node and trachea. Very low levels in adult and fetal kidney and liver, in adult spleen, thymus, ovary, colon and bone marrow. Not expressed in peripheral blood leukocytes and brain.

Its subcellular location is the cytoplasm. The catalysed reaction is a tertiary amine + S-adenosyl-L-methionine = a methylated tertiary amine + S-adenosyl-L-homocysteine + H(+). It carries out the reaction a secondary amine + S-adenosyl-L-methionine = a methylated secondary amine + S-adenosyl-L-homocysteine + H(+). The enzyme catalyses a primary amine + S-adenosyl-L-methionine = a methylated primary amine + S-adenosyl-L-homocysteine + H(+). It catalyses the reaction dimethyl sulfide + S-adenosyl-L-methionine = trimethylsulfonium + S-adenosyl-L-homocysteine. Its function is as follows. Functions as a thioether S-methyltransferase and is active with a variety of thioethers and the corresponding selenium and tellurium compounds, including 3-methylthiopropionaldehyde, dimethyl selenide, dimethyl telluride, 2-methylthioethylamine, 2-methylthioethanol, methyl-n-propyl sulfide and diethyl sulfide. Plays an important role in the detoxification of selenium compounds. Catalyzes the N-methylation of tryptamine and structurally related compounds. This chain is Indolethylamine N-methyltransferase (INMT), found in Homo sapiens (Human).